The following is a 286-amino-acid chain: NAD kinase (286 aa).

D66 (proton acceptor) is an active-site residue. NAD(+) is bound by residues 66-67 (DG), 137-138 (ND), R148, R165, D167, and 178-183 (TAYSMS).

Belongs to the NAD kinase family. A divalent metal cation serves as cofactor.

The protein resides in the cytoplasm. The enzyme catalyses NAD(+) + ATP = ADP + NADP(+) + H(+). In terms of biological role, involved in the regulation of the intracellular balance of NAD and NADP, and is a key enzyme in the biosynthesis of NADP. Catalyzes specifically the phosphorylation on 2'-hydroxyl of the adenosine moiety of NAD to yield NADP. The polypeptide is NAD kinase (Chlorobium chlorochromatii (strain CaD3)).